The following is a 375-amino-acid chain: DNA replication and repair protein RecF (375 aa).

30–37 (GENAQGKT) serves as a coordination point for ATP.

This sequence belongs to the RecF family.

It localises to the cytoplasm. The RecF protein is involved in DNA metabolism; it is required for DNA replication and normal SOS inducibility. RecF binds preferentially to single-stranded, linear DNA. It also seems to bind ATP. The chain is DNA replication and repair protein RecF from Bacillus cereus (strain G9842).